Consider the following 318-residue polypeptide: Glycerol 2-dehydrogenase (NADP(+)) (318 aa).

The active-site Proton donor is Tyr52. His115 contributes to the substrate binding site. An NADP(+)-binding site is contributed by 217 to 277 (SPLGSQNQVP…SSTPSRIESN (61 aa)).

It belongs to the aldo/keto reductase family.

The enzyme catalyses glycerol + NADP(+) = dihydroxyacetone + NADPH + H(+). In terms of biological role, glycerol oxidoreductase probably involved in glycerol synthesis. This chain is Glycerol 2-dehydrogenase (NADP(+)) (gld2), found in Hypocrea jecorina (Trichoderma reesei).